The primary structure comprises 435 residues: Serine--tRNA ligase (435 aa).

Thr-234 to Glu-236 is a binding site for L-serine. Position 265–267 (Arg-265–Glu-267) interacts with ATP. L-serine is bound at residue Glu-288. Glu-352–Ser-355 contacts ATP. Ser-388 contacts L-serine.

This sequence belongs to the class-II aminoacyl-tRNA synthetase family. Type-1 seryl-tRNA synthetase subfamily. As to quaternary structure, homodimer. The tRNA molecule binds across the dimer.

The protein resides in the cytoplasm. It catalyses the reaction tRNA(Ser) + L-serine + ATP = L-seryl-tRNA(Ser) + AMP + diphosphate + H(+). The catalysed reaction is tRNA(Sec) + L-serine + ATP = L-seryl-tRNA(Sec) + AMP + diphosphate + H(+). It participates in aminoacyl-tRNA biosynthesis; selenocysteinyl-tRNA(Sec) biosynthesis; L-seryl-tRNA(Sec) from L-serine and tRNA(Sec): step 1/1. Functionally, catalyzes the attachment of serine to tRNA(Ser). Is also able to aminoacylate tRNA(Sec) with serine, to form the misacylated tRNA L-seryl-tRNA(Sec), which will be further converted into selenocysteinyl-tRNA(Sec). The sequence is that of Serine--tRNA ligase from Synechococcus sp. (strain JA-3-3Ab) (Cyanobacteria bacterium Yellowstone A-Prime).